Reading from the N-terminus, the 255-residue chain is Zinc import ATP-binding protein ZnuC 1 (255 aa).

Positions 7–220 constitute an ABC transporter domain; the sequence is IRLQDVTVKI…PAFINLFGTQ (214 aa). ATP is bound at residue 39–46; the sequence is GPNGAGKS. The interval 229–255 is disordered; it reads HHHHDHHHHTDGTVAAGSECSHGDQHA.

Belongs to the ABC transporter superfamily. Zinc importer (TC 3.A.1.15.5) family. As to quaternary structure, the complex is composed of two ATP-binding proteins (ZnuC), two transmembrane proteins (ZnuB) and a solute-binding protein (ZnuA).

The protein resides in the cell inner membrane. The catalysed reaction is Zn(2+)(out) + ATP(in) + H2O(in) = Zn(2+)(in) + ADP(in) + phosphate(in) + H(+)(in). Its function is as follows. Part of the ABC transporter complex ZnuABC involved in zinc import. Responsible for energy coupling to the transport system. This chain is Zinc import ATP-binding protein ZnuC 1, found in Hahella chejuensis (strain KCTC 2396).